A 622-amino-acid chain; its full sequence is Phosphoribomutase (622 aa).

Substrate is bound by residues Thr-57, Arg-61, 158–159, and Lys-168; that span reads SH. The active-site Phosphoserine intermediate is Ser-158. A Mg(2+)-binding site is contributed by Ser-158. Ser-158 carries the phosphoserine modification. Asp-325, Asp-327, and Asp-329 together coordinate Mg(2+). Substrate-binding positions include 329–330, Thr-404, 428–430, and Lys-442; these read DR and EEA.

This sequence belongs to the phosphohexose mutase family. The cofactor is Mg(2+).

Its subcellular location is the cytoplasm. It localises to the nucleus. It catalyses the reaction alpha-D-ribose 1-phosphate = D-ribose 5-phosphate. In terms of biological role, major phosphoribomutase that converts ribose 1-phosphate to ribose 5-phosphate. Involved in ribose salvage via the pentose phosphate pathway. The polypeptide is Phosphoribomutase (Saccharomyces cerevisiae (strain ATCC 204508 / S288c) (Baker's yeast)).